The sequence spans 812 residues: Probable beta-glucosidase D (812 aa).

The first 18 residues, M1–A18, serve as a signal peptide directing secretion. N53 and N188 each carry an N-linked (GlcNAc...) asparagine glycan. Residues E186–S248 are disordered. Gly residues predominate over residues G191 to R207. Positions F211 to A225 are enriched in polar residues. A compositionally biased stretch (gly residues) spans G236 to A245. A glycan (N-linked (GlcNAc...) asparagine) is linked at N296. Residue D324 is part of the active site. 6 N-linked (GlcNAc...) asparagine glycosylation sites follow: N360, N384, N422, N501, N592, and N646.

Belongs to the glycosyl hydrolase 3 family.

The protein resides in the secreted. The enzyme catalyses Hydrolysis of terminal, non-reducing beta-D-glucosyl residues with release of beta-D-glucose.. It functions in the pathway glycan metabolism; cellulose degradation. Functionally, beta-glucosidases are one of a number of cellulolytic enzymes involved in the degradation of cellulosic biomass. Catalyzes the last step releasing glucose from the inhibitory cellobiose. In Emericella nidulans (strain FGSC A4 / ATCC 38163 / CBS 112.46 / NRRL 194 / M139) (Aspergillus nidulans), this protein is Probable beta-glucosidase D (bglD).